Reading from the N-terminus, the 1430-residue chain is 3'-5' RNA helicase YTHDC2 (1430 aa).

The segment at 1-37 (MSRPSSVSPRQPAPGGGGGGGPSPCGPGGGGRAKGLK) is disordered. Residues 14-33 (PGGGGGGGPSPCGPGGGGRA) are compositionally biased toward gly residues. In terms of domain architecture, R3H spans 38-106 (DIRIDEEVKI…NRYLTVKKKD (69 aa)). The Helicase ATP-binding domain occupies 203 to 369 (VKIIKENKVV…FGSCPVIYIQ (167 aa)). 216–223 (GETGSGKT) provides a ligand contact to ATP. The DEAH box motif lies at 316–319 (DEVH). ANK repeat units follow at residues 506–538 (TSATALMVAAGRGFASQVEQLISMGANVHSKAS) and 539–571 (NGWMALDWAKHFGQTEIVDLLESYSASLEFGNL). The 173-residue stretch at 612–784 (LLYNICHSCD…ELCLHTKLLA (173 aa)) folds into the Helicase C-terminal domain. Phosphoserine occurs at positions 1089, 1090, and 1092. Positions 1164–1174 (EQSAGLQQPSG) are enriched in polar residues. Residues 1164–1288 (EQSAGLQQPS…SPSPRPNMPV (125 aa)) are disordered. Positions 1191–1200 (SSWRSNNSRK) are enriched in low complexity. Residue Ser-1202 is modified to Phosphoserine. The segment covering 1231-1249 (KYKDRGILHPKRGTEDRSD) has biased composition (basic and acidic residues). Residues 1250–1264 (QSSVKSTDSSSYPSP) show a composition bias toward low complexity. A phosphoserine mark is found at Ser-1263, Ser-1267, and Ser-1281. The 131-residue stretch at 1288 to 1418 (VRYFIMKSSN…QVGEQLLQLW (131 aa)) folds into the YTH domain. Residues 1294–1296 (KSS), Trp-1310, and Trp-1360 each bind RNA.

This sequence belongs to the DEAD box helicase family. DEAH subfamily. As to quaternary structure, interacts with MEIOC; binds transcripts that regulate the mitotic cell cycle inhibiting progression into metaphase, thereby allowing meiotic prophase to proceed normally. Interacts (via ANK repeats) with XRN1. Interacts with ZCCHC4. Associates with the small ribosomal subunit. Interacts with RBM46.

It localises to the cytoplasm. The protein resides in the perinuclear region. It catalyses the reaction ATP + H2O = ADP + phosphate + H(+). Its function is as follows. 3'-5' RNA helicase that plays a key role in the male and female germline by promoting transition from mitotic to meiotic divisions in stem cells. Specifically recognizes and binds N6-methyladenosine (m6A)-containing RNAs, a modification present at internal sites of mRNAs and some non-coding RNAs that plays a role in the efficiency of RNA processing and stability. Essential for ensuring a successful progression of the meiotic program in the germline by regulating the level of m6A-containing RNAs. Acts by binding and promoting degradation of m6A-containing mRNAs: the 3'-5' RNA helicase activity is required for this process and RNA degradation may be mediated by XRN1 exoribonuclease. Required for both spermatogenesis and oogenesis. This is 3'-5' RNA helicase YTHDC2 from Pongo abelii (Sumatran orangutan).